Reading from the N-terminus, the 288-residue chain is THO complex subunit 4D (288 aa).

A disordered region spans residues 1-55 (MSGALNMTLDEIVKRGKTARSGGRGISRGRGRGRGGGGRGAGPARRGPLAVNARP). N-acetylserine is present on Ser2. Residues 93–170 (TRLHVTNLDQ…RPMRLEILGG (78 aa)) form the RRM domain. The tract at residues 201-288 (QGGGGRGRVR…SYHADAMNTS (88 aa)) is disordered. Over residues 232–260 (QGGGMRGGRGGFRARGRGNGGRGRGGGRG) the composition is skewed to gly residues. Residues 264–281 (KPVEKSAADLDKDLESYH) are compositionally biased toward basic and acidic residues.

This sequence belongs to the ALYREF family. As to quaternary structure, interacts with PARP1. Interacts with EIF4A3.

The protein resides in the nucleus. The protein localises to the nucleoplasm. It is found in the nucleolus. Export adapter involved in nuclear export of spliced and unspliced mRNA. Plays a role in disease resistance. Mediates multiple defense responses triggered by NEP1, including stomatal closure, hypersensitive cell death (HCD) and defense-related gene expression. The protein is THO complex subunit 4D of Arabidopsis thaliana (Mouse-ear cress).